Consider the following 439-residue polypeptide: Histone acetyltransferase GCN5 (439 aa).

Basic and acidic residues-rich tracts occupy residues 1–28 (MVTK…KLEN) and 39–59 (ETNK…KETE). The tract at residues 1–59 (MVTKHQIEEDHLDGATTDPEVKRVKLENNVEEIQPEQAETNKQEGTDKENKGKFEKETE) is disordered. Residues 100 to 255 (IEFRVVNNDN…GGTLMQCSML (156 aa)) enclose the N-acetyltransferase domain. Glu-173 serves as the catalytic Proton donor/acceptor. Acetyl-CoA is bound by residues 177-179 (CAI), 184-190 (QVRGYGA), and 216-219 (YAIG). Residues 327-431 (PKRGPHDAAI…KFFNNKVKEI (105 aa)) form the Bromo domain.

This sequence belongs to the acetyltransferase family. GCN5 subfamily. As to quaternary structure, component of the 1.8 MDa SAGA (Spt-Ada-Gcn5 acetyltransferase) complex, which is composed of 19 subunits TRA1, SPT7, TAF5, NGG1/ADA3, SGF73, SPT20/ADA5, SPT8, TAF12, TAF6, HFI1/ADA1, UBP8, GCN5, ADA2, SPT3, SGF29, TAF10, TAF9, SGF11 and SUS1. The SAGA complex is composed of 4 modules, namely the HAT (histone acetyltransferase) module (GCN5, ADA2, NGG1/ADA3 and SGF29), the DUB (deubiquitinating) module (UBP8, SGF11, SGF73 and SUS1), the core or TAF (TBP-associated factor) module (TAF5, TAF6, TAF9, TAF10 and TAF12), and the Tra1 or SPT (Suppressor of Ty) module (TRA1, HFI1/ADA1, SPT3, SPT7, SPT8 and SPT20/ADA5). The Tra1/SPT module binds activators, the core module recruits TBP (TATA-binding protein), the HAT module contains the histone H3 acetyltransferase GCN5, and the DUB module comprises the histone H2B deubiquitinase UBP8. Also identified in an altered form of SAGA, named SALSA (SAGA altered, Spt8 absent) or SLIK (SAGA-like) complex, which contains a C-terminal truncated form of SPT7 and is missing SPT8. However, it has been shown that the SAGA and SAGA-like SALSA/SLIK transcriptional coactivators are structurally and biochemically equivalent. Component of the 0.8 MDa ADA complex, a HAT complex distinct from SAGA, which at least consists of ADA2, NGG1/ADA3, AHC1, AHC2, SGF29 and GCN5. Component of an ADA/GCN5 complex that consists of HFI1/ADA1, ADA2, NGG1/ADA3, SPT20/ADA5 and GCN5 and probably is a subcomplex of SAGA.

It is found in the nucleus. The protein resides in the cytoplasm. The enzyme catalyses L-lysyl-[protein] + acetyl-CoA = N(6)-acetyl-L-lysyl-[protein] + CoA + H(+). It catalyses the reaction (2E)-butenoyl-CoA + L-lysyl-[protein] = N(6)-(2E)-butenoyl-L-lysyl-[protein] + CoA + H(+). In terms of biological role, histone acetyltransferase that acetylates histone H2B to form H2BK11ac and H2BK16ac, histone H3 to form H3K9ac, H3K14ac, H3K18ac, H3K23ac, H3K27ac and H3K36ac, with a lower preference histone H4 to form H4K8ac and H4K16ac, and contributes to H2A.Z acetylation. Acetylation of histones gives a specific tag for epigenetic transcription activation and elongation. Operates in concert with certain DNA-binding transcriptional activators such as GCN4 or HAP2/3/4. Its acetyltransferase activity seems to be dependent on the association in different multisubunit complexes. Component of the transcription coactivator SAGA complex. SAGA acts as a general cofactor required for essentially all RNA polymerase II transcription. At the promoters, SAGA is required for transcription pre-initiation complex (PIC) recruitment. It influences RNA polymerase II transcriptional activity through different activities such as TBP interaction (via core/TAF module) and promoter selectivity, interaction with transcription activators (via Tra1/SPT module), and chromatin modification through histone acetylation (via HAT module) and deubiquitination (via DUB module). SAGA preferentially acetylates histones H3 (to form H3K9ac, H3K14ac, H3K18ac and H3K23ac) and H2B and deubiquitinates histone H2B. SAGA interacts with DNA via upstream activating sequences (UASs). Also identified in a modified version of SAGA named SALSA or SLIK. The cleavage of SPT7 and the absence of the SPT8 subunit in SLIK neither drive any major conformational differences in its structure compared with SAGA, nor significantly affect HAT, DUB, or DNA-binding activities. Component of the ADA histone acetyltransferase complex, which preferentially acetylates nucleosomal histones H3 (to form H3K14ac and H3K18ac) and H2B. In addition to histone acetyltransferase, can use different acyl-CoA substrates, such as (2E)-butenoyl-CoA (crotonyl-CoA) and is able to mediate histone crotonylation. Controls the metaphase-to-anaphase transition and is required for correct chromosome segregation and centromere/kinetochore function in mitosis. May be involved in response to DNA damage by genotoxic agents. This is Histone acetyltransferase GCN5 from Saccharomyces cerevisiae (strain ATCC 204508 / S288c) (Baker's yeast).